The following is a 714-amino-acid chain: Probable serine/threonine-protein kinase At1g09600 (714 aa).

The segment at 1-64 is disordered; it reads MGCNCTKGTR…NVGFEERSND (64 aa). A lipid anchor (N-myristoyl glycine) is attached at glycine 2. Over residues 16–27 the composition is skewed to low complexity; that stretch reads VDNSNSIVSNVN. Basic residues predominate over residues 31-46; it reads RRSKPKKTPKKKKKSK. The region spanning 163–447 is the Protein kinase domain; it reads FEKLEKIGQG…TASALESEFF (285 aa). ATP-binding positions include 169–177 and lysine 192; that span reads IGQGTYSSV. Catalysis depends on aspartate 287, which acts as the Proton acceptor. Positions 471–498 are enriched in basic and acidic residues; that stretch reads KAQEEEAKRKKDTSSKQNDSKQVSRESK. Disordered regions lie at residues 471–579 and 693–714; these read KAQE…RKEL and VDKK…ANGR. 2 stretches are compositionally biased toward polar residues: residues 506–528 and 556–573; these read NAES…NSDK and GVSS…GSSR.

Belongs to the protein kinase superfamily. Ser/Thr protein kinase family.

The sequence is that of Probable serine/threonine-protein kinase At1g09600 from Arabidopsis thaliana (Mouse-ear cress).